The following is a 180-amino-acid chain: MAALLMPRRNKGMRTRLGCLSHKSDSCSDFTAILPDKPNRALKRLSTEEATRWADSFDVLLSHKYGVAAFRAFLKTEFSEENLEFWLACEEFKKTRSTAKLVTKAHRIFEEFVDVQAPREVNIDFQTREATRKNMQEPSLTCFDQAQGKVHSLMEKDSYPRFLRSKMYLDLLSQSQRRLS.

A Phosphoserine modification is found at S26. An RGS domain is found at S56 to L171.

In terms of assembly, interacts with GNAO1 and GNAI3. Expressed at high levels in brain. Very little expression detected in other tissues. Detected in Purkinje cells in the cerebellum.

It is found in the cell membrane. Its subcellular location is the membrane. It localises to the perikaryon. The protein resides in the cell projection. The protein localises to the dendrite. It is found in the nucleus. Its function is as follows. Regulates G protein-coupled receptor signaling cascades, including signaling via muscarinic acetylcholine receptor CHRM2 and dopamine receptor DRD2. Inhibits signal transduction by increasing the GTPase activity of G protein alpha subunits, thereby driving them into their inactive GDP-bound form. Modulates the activity of potassium channels that are activated in response to DRD2 and CHRM2 signaling. This is Regulator of G-protein signaling 8 (Rgs8) from Rattus norvegicus (Rat).